The sequence spans 378 residues: MAVVDVHRFAESITCHAWSPDLSMVALCPNNTEVHIYKSLSQDHWERLHVLQKHDQIVSGIDWSSKSNKIVTVSHDRNSYVWSLEGAEWVPTLVILRLNRAALCVQWSPKENKFAVGSGAKTVCICYYEQENNWWVSKLIRKRHESSVTSVAWHPNNVLLATTSTDGKCRVFSTFIKGVDTKDSKAGSPAETKFGEQILQLDLSYSWAFGVKWSPSGNTLAYVGHSSMIYFVDDVGPSPLAQSVAFRDLPLRDVLFISEKMVIGVGYDSNPMVFAADDTGIWSFIRYIGEKKAASSGSSYSSQFSEAFGKFYGSQSKSTTANDASDSRGGVHDNSITSIVPLGKGGSPKVMRFSTSGLDGKIAIWDLENMQQELGNQF.

WD repeat units lie at residues 8-47 (RFAESITCHAWSPDLSMVALCPNNTEVHIYKSLSQDHWER), 53-92 (KHDQIVSGIDWSSKSNKIVTVSHDRNSYVWSLEGAEWVPT), 97-138 (RLNR…WVSK), 143-182 (RHESSVTSVAWHPNNVLLATTSTDGKCRVFSTFIKGVDTK), 203-242 (LSYSWAFGVKWSPSGNTLAYVGHSSMIYFVDDVGPSPLAQ), 257-295 (ISEKMVIGVGYDSNPMVFAADDTGIWSFIRYIGEKKAAS), and 331-375 (VHDN…QELG). The tract at residues 319–340 (TTANDASDSRGGVHDNSITSIV) is disordered.

This sequence belongs to the WD repeat ARPC1 family. As to quaternary structure, component of the Arp2/3 complex composed of ARP2, ARP3, ARPC1/p41-ARC, ARPC2/p34-ARC, ARPC3/p21-ARC, ARPC4/p20-ARC and ARPC5/p16-ARC. Expressed at low levels in all tissues with a relatively highest expression in inflorescences.

The protein resides in the cytoplasm. It localises to the cytoskeleton. In terms of biological role, functions as a component of the Arp2/3 complex which is involved in regulation of actin polymerization and together with an activating nucleation-promoting factor (NPF) mediates the formation of branched actin networks. Arp2/3 complex plays a critical role in the control of cell morphogenesis via the modulation of cell polarity development. The chain is Actin-related protein 2/3 complex subunit 1B (ARPC1B) from Arabidopsis thaliana (Mouse-ear cress).